The following is a 79-amino-acid chain: Cell division protein ZapB (79 aa).

Residues 4–78 are a coiled coil; that stretch reads EVFEKLEAKV…LRALLGKMEE (75 aa).

It belongs to the ZapB family. Homodimer. The ends of the coiled-coil dimer bind to each other, forming polymers. Interacts with FtsZ.

The protein localises to the cytoplasm. Functionally, non-essential, abundant cell division factor that is required for proper Z-ring formation. It is recruited early to the divisome by direct interaction with FtsZ, stimulating Z-ring assembly and thereby promoting cell division earlier in the cell cycle. Its recruitment to the Z-ring requires functional FtsA or ZipA. The sequence is that of Cell division protein ZapB from Pectobacterium atrosepticum (strain SCRI 1043 / ATCC BAA-672) (Erwinia carotovora subsp. atroseptica).